A 132-amino-acid polypeptide reads, in one-letter code: Ribonuclease VapC (132 aa).

A PINc domain is found at Y4–V123. Mg(2+) is bound by residues D7 and D98.

Belongs to the PINc/VapC protein family. As to quaternary structure, probably forms a complex with cognate antitoxin VapB2. It depends on Mg(2+) as a cofactor.

Its function is as follows. Toxic component of a type II toxin-antitoxin (TA) system. Acts as an RNase. Its toxic effect is neutralized by cognate antitoxin VapB2 but not by non-cognate antitoxin VapB1. The sequence is that of Ribonuclease VapC from Haemophilus influenzae (strain 86-028NP).